We begin with the raw amino-acid sequence, 586 residues long: Arginine--tRNA ligase (586 aa).

The 'HIGH' region signature appears at alanine 131–histidine 141.

The protein belongs to the class-I aminoacyl-tRNA synthetase family. Monomer.

It localises to the cytoplasm. The catalysed reaction is tRNA(Arg) + L-arginine + ATP = L-arginyl-tRNA(Arg) + AMP + diphosphate. This chain is Arginine--tRNA ligase, found in Azorhizobium caulinodans (strain ATCC 43989 / DSM 5975 / JCM 20966 / LMG 6465 / NBRC 14845 / NCIMB 13405 / ORS 571).